We begin with the raw amino-acid sequence, 640 residues long: MPTITLPDGSQRSFDHPVTVAEVAQSIGAGLAKATLAGKVDGKLVDACDLIERDASLQIITPKDEEGLEIIRHSCAHLVGHAVKQLYPNAKMVIGPVIDEGFYYDIAIDRPFTPEDMAAIEKRMAELIDKDYDVIKKVTPRAEVIEVFTSRGEDYKLRLVDDMPDEQAMGLYYHEEYVDMCRGPHVPNTRFLKAFKLTRISGAYWRGDSKNEQLQRIYGTAWADKKQLAAYIQRIEEAEKRDHRRIGKQLDLFHTQEEAPGMVFWHPAGWTLYQNLEQYMRQVQRENGYQEVRTPQVVDRILWEKSGHWSNYAENMFTTSSENRDYAVKPMNCPCHVQIFNQGLKSYRDLPLRMAEFGACHRNEPSGALHGIMRVRGFTQDDAHIFCTEEQVKKEAADFIKLTLKVYADFGFSDIAMKLSTRPAKRVGSDELWDRAEGALAEALNESGLAWEYQPGEGAFYGPKIEFTLRDCLGRNWQCGTLQYDPNLPERLDASYVAEDNSRQRPVMLHRAILGSFERFIGMLIEHYAGAFPAWLAPTQAVIMNITDKQAAFAIEVEKTLVQSGFRAKCDLRNEKIGFKIREHTLLKTPYLLVIGDREVETRSVAVRSREGVDMGSMPLEQFAQLLAQAVSRRGRQESE.

A TGS domain is found at 1 to 61; the sequence is MPTITLPDGS…ERDASLQIIT (61 aa). The segment at 242 to 533 is catalytic; sequence DHRRIGKQLD…LIEHYAGAFP (292 aa). 3 residues coordinate Zn(2+): cysteine 333, histidine 384, and histidine 510.

Belongs to the class-II aminoacyl-tRNA synthetase family. As to quaternary structure, homodimer. The cofactor is Zn(2+).

It is found in the cytoplasm. It catalyses the reaction tRNA(Thr) + L-threonine + ATP = L-threonyl-tRNA(Thr) + AMP + diphosphate + H(+). Catalyzes the attachment of threonine to tRNA(Thr) in a two-step reaction: L-threonine is first activated by ATP to form Thr-AMP and then transferred to the acceptor end of tRNA(Thr). Also edits incorrectly charged L-seryl-tRNA(Thr). The chain is Threonine--tRNA ligase from Stutzerimonas stutzeri (strain A1501) (Pseudomonas stutzeri).